Reading from the N-terminus, the 556-residue chain is (6-4)DNA photolyase (556 aa).

The region spanning 24–162 is the Photolyase/cryptochrome alpha/beta domain; sequence SGSLIWFRKG…EVFSPVSHTL (139 aa). Residue E262 participates in phosphate binding. Residues K263, 276–280, 317–321, 380–383, R386, 415–417, and N421 contribute to the FAD site; these read TTVMS, QLLWR, WMHH, and DSD. Residue W320 participates in DNA binding. Residues 382-387 form an interaction with DNA region; sequence HHLARH. Position 427 (W427) interacts with DNA. The interval 534 to 556 is disordered; sequence LRRKLQKDEHEESKIRNQRPKLK. Residues 539-548 show a composition bias toward basic and acidic residues; sequence QKDEHEESKI.

Belongs to the DNA photolyase class-1 family. Requires FAD as cofactor. As to expression, expressed in siliques, flowers and leaves. Not detected in roots.

It catalyses the reaction (6-4) photoproduct (in DNA) = 2 pyrimidine residues (in DNA).. Its function is as follows. Involved in repair of UV radiation-induced DNA damage. Catalyzes the photoreactivation of pyrimidine [6-4] pyrimidone photoproduct (6-4 products). Binds specifically to DNA containing 6-4 products and repairs these lesions in a visible light-dependent manner. Not required for repair of cyclobutane pyrimidine dimer (CPD). This is (6-4)DNA photolyase (UVR3) from Arabidopsis thaliana (Mouse-ear cress).